A 369-amino-acid chain; its full sequence is tRNA 2-selenouridine synthase (369 aa).

The Rhodanese domain maps to 12-136 (FLDDIPLMDV…LRNFLFETTR (125 aa)). C95 acts as the S-selanylcysteine intermediate in catalysis.

This sequence belongs to the SelU family. Monomer.

The enzyme catalyses 5-methylaminomethyl-2-thiouridine(34) in tRNA + selenophosphate + (2E)-geranyl diphosphate + H2O + H(+) = 5-methylaminomethyl-2-selenouridine(34) in tRNA + (2E)-thiogeraniol + phosphate + diphosphate. The catalysed reaction is 5-methylaminomethyl-2-thiouridine(34) in tRNA + (2E)-geranyl diphosphate = 5-methylaminomethyl-S-(2E)-geranyl-thiouridine(34) in tRNA + diphosphate. It catalyses the reaction 5-methylaminomethyl-S-(2E)-geranyl-thiouridine(34) in tRNA + selenophosphate + H(+) = 5-methylaminomethyl-2-(Se-phospho)selenouridine(34) in tRNA + (2E)-thiogeraniol. It carries out the reaction 5-methylaminomethyl-2-(Se-phospho)selenouridine(34) in tRNA + H2O = 5-methylaminomethyl-2-selenouridine(34) in tRNA + phosphate. Involved in the post-transcriptional modification of the uridine at the wobble position (U34) of tRNA(Lys), tRNA(Glu) and tRNA(Gln). Catalyzes the conversion of 2-thiouridine (S2U-RNA) to 2-selenouridine (Se2U-RNA). Acts in a two-step process involving geranylation of 2-thiouridine (S2U) to S-geranyl-2-thiouridine (geS2U) and subsequent selenation of the latter derivative to 2-selenouridine (Se2U) in the tRNA chain. This chain is tRNA 2-selenouridine synthase, found in Pseudomonas aeruginosa (strain LESB58).